Reading from the N-terminus, the 507-residue chain is Arabinose import ATP-binding protein AraG (507 aa).

2 consecutive ABC transporter domains span residues 14-249 (LRFN…MVGR) and 249-505 (RDIQ…LPRT). Residue 46-53 (GENGAGKS) coordinates ATP.

Belongs to the ABC transporter superfamily. Arabinose importer (TC 3.A.1.2.2) family. In terms of assembly, the complex is composed of two ATP-binding proteins (AraG), two transmembrane proteins (AraH) and a solute-binding protein (AraF).

Its subcellular location is the cell inner membrane. The catalysed reaction is L-arabinose(out) + ATP + H2O = L-arabinose(in) + ADP + phosphate + H(+). Functionally, part of the ABC transporter complex AraFGH involved in arabinose import. Responsible for energy coupling to the transport system. In Pseudomonas syringae pv. tomato (strain ATCC BAA-871 / DC3000), this protein is Arabinose import ATP-binding protein AraG.